We begin with the raw amino-acid sequence, 276 residues long: Diaminopimelate epimerase (276 aa).

Residues Asn13, Gln46, and Asn66 each coordinate substrate. Catalysis depends on Cys75, which acts as the Proton donor. Residues 76-77 (GN), Asn159, Asn192, and 210-211 (ER) contribute to the substrate site. Cys219 functions as the Proton acceptor in the catalytic mechanism. Residue 220 to 221 (GT) participates in substrate binding.

It belongs to the diaminopimelate epimerase family. As to quaternary structure, homodimer.

It is found in the cytoplasm. The catalysed reaction is (2S,6S)-2,6-diaminopimelate = meso-2,6-diaminopimelate. The protein operates within amino-acid biosynthesis; L-lysine biosynthesis via DAP pathway; DL-2,6-diaminopimelate from LL-2,6-diaminopimelate: step 1/1. Functionally, catalyzes the stereoinversion of LL-2,6-diaminopimelate (L,L-DAP) to meso-diaminopimelate (meso-DAP), a precursor of L-lysine and an essential component of the bacterial peptidoglycan. The polypeptide is Diaminopimelate epimerase (Pseudomonas savastanoi pv. phaseolicola (strain 1448A / Race 6) (Pseudomonas syringae pv. phaseolicola (strain 1448A / Race 6))).